The chain runs to 230 residues: Orotidine 5'-phosphate decarboxylase (230 aa).

Residues Asp-9, Lys-31, 58–67 (DLKFFDIPNT), Thr-120, Arg-180, Gln-188, Gly-208, and Arg-209 contribute to the substrate site. The active-site Proton donor is the Lys-60.

Belongs to the OMP decarboxylase family. Type 1 subfamily. In terms of assembly, homodimer.

It catalyses the reaction orotidine 5'-phosphate + H(+) = UMP + CO2. It participates in pyrimidine metabolism; UMP biosynthesis via de novo pathway; UMP from orotate: step 2/2. Its function is as follows. Catalyzes the decarboxylation of orotidine 5'-monophosphate (OMP) to uridine 5'-monophosphate (UMP). The sequence is that of Orotidine 5'-phosphate decarboxylase from Maridesulfovibrio salexigens (strain ATCC 14822 / DSM 2638 / NCIMB 8403 / VKM B-1763) (Desulfovibrio salexigens).